Here is a 482-residue protein sequence, read N- to C-terminus: Lipoamide acyltransferase component of branched-chain alpha-keto acid dehydrogenase complex, mitochondrial (482 aa).

Residues 1-61 (MAAALVLRTW…QWLKTTAALQ (61 aa)) constitute a mitochondrion transit peptide. The 76-residue stretch at 64-139 (IVQFKLSDIG…YVGKPLVDIE (76 aa)) folds into the Lipoyl-binding domain. K105 carries the post-translational modification N6-lipoyllysine. Position 133 is an N6-succinyllysine (K133). The critical for association with PPM1K stretch occupies residues 145-160 (DSEEDVVETPAVSHDE). The disordered stretch occupies residues 146-171 (SEEDVVETPAVSHDEHTHQEIKGQKT). The segment covering 157–168 (SHDEHTHQEIKG) has biased composition (basic and acidic residues). Residues 172–209 (LATPAVRRLAMENNIKLSEVIGSGKDGRILKEDILNYL) enclose the Peripheral subunit-binding (PSBD) domain. An N6-acetyllysine; alternate modification is found at K196. Residue K196 is modified to N6-succinyllysine; alternate. The residue at position 202 (K202) is an N6-acetyllysine. Residues 218-230 (PPSPKAEIMPPPP) are compositionally biased toward pro residues. Residues 218–238 (PPSPKAEIMPPPPKPKDRTIP) are disordered. S220 is modified (phosphoserine). Residues K243 and K250 each carry the N6-acetyllysine modification. Residue K261 is modified to N6-succinyllysine. K289 carries the post-translational modification N6-acetyllysine; alternate. Position 289 is an N6-succinyllysine; alternate (K289). R291 provides a ligand contact to CoA. N6-acetyllysine occurs at positions 295 and 304. CoA contacts are provided by S306, D349, Q378, S399, N400, S403, G424, and I426. N6-acetyllysine is present on K435. K440 is subject to N6-acetyllysine; alternate. Position 440 is an N6-succinyllysine; alternate (K440). Residues H452 and D456 contribute to the active site.

This sequence belongs to the 2-oxoacid dehydrogenase family. As to quaternary structure, forms a 24-polypeptide structural core with octahedral symmetry that represents the E2 component of the branched-chain alpha-ketoacid dehydrogenase (BCKDH) complex. The BCKDH complex is composed of three major building blocks E1, E2 and E3. It is organized around E2, a 24-meric cubic core composed of DBT, to which are associated 6 to 12 copies of E1, and approximately 6 copies of the dehydrogenase E3, a DLD dimer. Interacts with PPM1K with a 24:1 stoichiometry; the N-terminal region (residues 49-61) of PPM1K and C-terminal linker of the lipoyl domain of DBT/E2 (residues 145-160) are critical for this interaction whereas the lipoyl prosthetic group is dispensable. This interaction requires colocalization in mitochondria. PPM1K competes with BCKDK for binding to DBT; this interaction is modulated by branched-chain alpha-keto acids (BCKAs). At steady state, BCKDH holoenzyme preferentially binds BCKDK and BCKDHA is phosphorylated. In response to high levels of BCKAs, BCKDK is replaced by PPM1K leading to BCKDHA dephosphorylation. The cofactor is (R)-lipoate. In terms of tissue distribution, expressed in kidney (at protein level).

It localises to the mitochondrion matrix. It carries out the reaction N(6)-[(R)-dihydrolipoyl]-L-lysyl-[protein] + 2-methylpropanoyl-CoA = N(6)-[(R)-S(8)-2-methylpropanoyldihydrolipoyl]-L-lysyl-[protein] + CoA. The branched-chain alpha-keto dehydrogenase complex catalyzes the overall conversion of alpha-keto acids to acyl-CoA and CO(2). It contains multiple copies of three enzymatic components: branched-chain alpha-keto acid decarboxylase (E1), lipoamide acyltransferase (E2) and lipoamide dehydrogenase (E3). Within this complex, the catalytic function of this enzyme is to accept, and to transfer to coenzyme A, acyl groups that are generated by the branched-chain alpha-keto acid decarboxylase component. This Bos taurus (Bovine) protein is Lipoamide acyltransferase component of branched-chain alpha-keto acid dehydrogenase complex, mitochondrial (DBT).